Reading from the N-terminus, the 152-residue chain is Aspartate-rich protein (152 aa).

The signal sequence occupies residues 1–19 (MQKLLLAVLFFSLLAVATA). The segment covering 82–113 (ATPKTEAEPGSLDKGEGTKGEKGKEGKKEKGE) has biased composition (basic and acidic residues). Residues 82 to 152 (ATPKTEAEPG…VHENDDENED (71 aa)) form a disordered region. The segment covering 135–152 (DDDDDRDDVHENDDENED) has biased composition (acidic residues).

As to expression, prismatic layer of shell (at protein level). Expressed primarily in the mantle with highest level in the mantle edge and lower level in the mantle pallium.

The protein resides in the secreted. This Margaritifera margaritifera (Freshwater pearl mussel) protein is Aspartate-rich protein.